The chain runs to 122 residues: Small ribosomal subunit protein bS6 (122 aa).

Belongs to the bacterial ribosomal protein bS6 family.

In terms of biological role, binds together with bS18 to 16S ribosomal RNA. The chain is Small ribosomal subunit protein bS6 from Methylibium petroleiphilum (strain ATCC BAA-1232 / LMG 22953 / PM1).